Here is a 210-residue protein sequence, read N- to C-terminus: Vacuolar protein sorting-associated protein 28 homolog (210 aa).

In terms of domain architecture, VPS28 N-terminal spans 1-106 (MSSQNANLMR…REGRPITVKD (106 aa)). In terms of domain architecture, VPS28 C-terminal spans 110 to 206 (NVLKHIASIV…AYQAFNKALN (97 aa)).

It belongs to the VPS28 family. As to quaternary structure, component of the ESCRT-I complex (endosomal sorting complex required for transport I). Expressed in embryos.

The protein localises to the endosome. Component of the ESCRT-I complex, a regulator of vesicular trafficking process. In Caenorhabditis elegans, this protein is Vacuolar protein sorting-associated protein 28 homolog (vps-28).